A 505-amino-acid polypeptide reads, in one-letter code: 2,3-bisphosphoglycerate-independent phosphoglycerate mutase (505 aa).

Mn(2+) is bound by residues Asp-12 and Ser-62. Catalysis depends on Ser-62, which acts as the Phosphoserine intermediate. Residues His-123, 153-154, Arg-185, Arg-191, 257-260, and Lys-330 contribute to the substrate site; these read RD and RPDR. Residues Asp-397, His-401, Asp-438, His-439, and His-456 each coordinate Mn(2+).

This sequence belongs to the BPG-independent phosphoglycerate mutase family. As to quaternary structure, monomer. Mn(2+) serves as cofactor.

It carries out the reaction (2R)-2-phosphoglycerate = (2R)-3-phosphoglycerate. It functions in the pathway carbohydrate degradation; glycolysis; pyruvate from D-glyceraldehyde 3-phosphate: step 3/5. Functionally, catalyzes the interconversion of 2-phosphoglycerate and 3-phosphoglycerate. This is 2,3-bisphosphoglycerate-independent phosphoglycerate mutase from Staphylococcus haemolyticus (strain JCSC1435).